A 279-amino-acid chain; its full sequence is Undecaprenyl-diphosphatase (279 aa).

6 consecutive transmembrane segments (helical) span residues phenylalanine 45 to tyrosine 65, tryptophan 85 to phenylalanine 105, phenylalanine 113 to valine 133, serine 188 to leucine 208, leucine 226 to leucine 246, and phenylalanine 255 to valine 275.

This sequence belongs to the UppP family.

The protein localises to the cell membrane. It catalyses the reaction di-trans,octa-cis-undecaprenyl diphosphate + H2O = di-trans,octa-cis-undecaprenyl phosphate + phosphate + H(+). Catalyzes the dephosphorylation of undecaprenyl diphosphate (UPP). Confers resistance to bacitracin. The chain is Undecaprenyl-diphosphatase from Streptococcus agalactiae serotype III (strain NEM316).